We begin with the raw amino-acid sequence, 121 residues long: Large ribosomal subunit protein uL14 (121 aa).

This sequence belongs to the universal ribosomal protein uL14 family. In terms of assembly, part of the 50S ribosomal subunit. Forms a cluster with proteins L3 and L19. In the 70S ribosome, L14 and L19 interact and together make contacts with the 16S rRNA in bridges B5 and B8.

In terms of biological role, binds to 23S rRNA. Forms part of two intersubunit bridges in the 70S ribosome. The chain is Large ribosomal subunit protein uL14 from Bacteroides fragilis (strain ATCC 25285 / DSM 2151 / CCUG 4856 / JCM 11019 / LMG 10263 / NCTC 9343 / Onslow / VPI 2553 / EN-2).